The primary structure comprises 511 residues: Exodeoxyribonuclease 7 large subunit (511 aa).

Belongs to the XseA family. In terms of assembly, heterooligomer composed of large and small subunits.

The protein localises to the cytoplasm. The catalysed reaction is Exonucleolytic cleavage in either 5'- to 3'- or 3'- to 5'-direction to yield nucleoside 5'-phosphates.. Bidirectionally degrades single-stranded DNA into large acid-insoluble oligonucleotides, which are then degraded further into small acid-soluble oligonucleotides. The polypeptide is Exodeoxyribonuclease 7 large subunit (Brucella canis (strain ATCC 23365 / NCTC 10854 / RM-666)).